The primary structure comprises 765 residues: Probable exo-1,4-beta-xylosidase bxlB (765 aa).

Positions Met1 to Ala25 are cleaved as a signal peptide. Residues Asn67 and Asn107 are each glycosylated (N-linked (GlcNAc...) asparagine). The active site involves Asp293. 5 N-linked (GlcNAc...) asparagine glycosylation sites follow: Asn345, Asn412, Asn423, Asn464, and Asn761.

It belongs to the glycosyl hydrolase 3 family.

It is found in the secreted. It catalyses the reaction Hydrolysis of (1-&gt;4)-beta-D-xylans, to remove successive D-xylose residues from the non-reducing termini.. Its pathway is glycan degradation; xylan degradation. In terms of biological role, xylan 1,4-beta-xylosidase involved in the hydrolysis of xylan, a major structural heterogeneous polysaccharide found in plant biomass representing the second most abundant polysaccharide in the biosphere, after cellulose. This is Probable exo-1,4-beta-xylosidase bxlB (bxlB) from Aspergillus terreus (strain NIH 2624 / FGSC A1156).